Consider the following 746-residue polypeptide: MIHLSQTMDKSSLPSLSDLCMSLVSSRLELFCEMRDDGSLSFREPLVFPQELADQLLCKMATDGVLNDSTVGIFRNCQQFRLRHACIRTARISAEAFHRALCPHRLVELDASRVNADLTIADILRGLSSNKSLQESLQRLVLNGLTMSSLEEPSRRCFSAMQGLRALSVSNVDFYDWGLADVCLLPRLESLDISNTSVSNLTPLLGLRSRLRYLTMHQLKRLEMTTAQLLAVLSQLEVLQHLDISDDKQFTSDVARQLLETPGILPQLVSLDVSGRKQVTDAAVKAFVEARPGMTFVGLLATDAGFSEFLSGEGSLKVTGEANETQICEALRRYSEREGFVREALFHLFSLTHAIEKPRPDILKLVALGMKNHPTTLNVQLAASACVFNLTKQELAFGIPVRLLGNVTQQLLEAMKTFPNHQQLQKNCLLSLCSDRILQEVPFNRFEAAKLVMQWLCNHEDQNMQRMAVAIISILAAKLSTEQTAQLGAELFIVKQLLHIVRQKTCQSTVDATLKFTLSALWNLTDESPTTCRHFIENQGLELFIKVLESFPSESSIQQKVLGLLNNIAEVSELHGELMVQSFLDHIRTLLHSPEVEVSYFAAGILAHLTSRGEKVWTLELTLRNTLLQQLHSAILKWPTPECEMVAYRSFNPFFPLLECFQTPGVQLWAAWAMQHVCSKNAGRYCSMLLEEGGLQHLEAITSHPKTHSDVRRLTESILDGLQRHRARTGYTAIPKTQAHREKCNP.

3 LRR repeats span residues 185–209 (LPRL…GLRS), 216–241 (MHQL…VLQH), and 265–289 (LPQL…AFVE).

This sequence belongs to the zyg-11 family.

Serves as substrate adapter subunit in an E3 ubiquitin ligase complex zyg11-cul2-elongin BC. Targets substrates bearing N-terminal glycine degrons for proteasomal degradation. The sequence is that of Protein zyg-11 homolog (zyg11) from Danio rerio (Zebrafish).